Consider the following 157-residue polypeptide: Ribonuclease H (157 aa).

An RNase H type-1 domain is found at 3–144 (ELKQLYIFTD…CDVLARKAAE (142 aa)). Residues Asp12, Glu50, Asp72, and Asp136 each coordinate Mg(2+).

This sequence belongs to the RNase H family. In terms of assembly, monomer. Mg(2+) serves as cofactor.

It localises to the cytoplasm. It carries out the reaction Endonucleolytic cleavage to 5'-phosphomonoester.. In terms of biological role, endonuclease that specifically degrades the RNA of RNA-DNA hybrids. This chain is Ribonuclease H, found in Shewanella frigidimarina (strain NCIMB 400).